The sequence spans 361 residues: MTHERGYDLASQVLNICNVHHKKLFCHITYRHLLVLSSDDNGCVILKKVITIADDFLKDEFLDLIAQHAHSLSMHDLGISLIQHVLELDFTKKTTQDDKRLHELMAEFDEVLSTSVTADVDKLHKLASKLMLDSDLFFEFVITRRGSLMIQIILGKSEEVDQVILAGVKQRFIDVTTNFYGYRIMIQTIKVFKKRGDLKVYDQILRLIGVHALYLTKDPDMGNKTFQHAINLHHQDCTTFIACGLQSHYIELSFLKHGSKIVEMLIDDRISMVPLVLLMMEIVKCDEDTLVRLATDEYGNNILKKFLALAKEHKEDFFGDLVDKLNPLLDSLRGTLGENIVAIIDSETEMVKDRIVSQGNN.

Residues 5 to 348 form the PUM-HD domain; the sequence is RGYDLASQVL…NIVAIIDSET (344 aa). 2 Pumilio repeats span residues 27 to 63 and 64 to 103; these read HITY…EFLD and LIAQ…RLHE. The stretch at 104-131 is one Pumilio 3; degenerate repeat; it reads LMAEFDEVLSTSVTADVDKLHKLASKLM. The stretch at 132–167 is one Pumilio 4 repeat; sequence LDSDLFFEFVITRRGSLMIQIILGKSEEVDQVILAG. One copy of the Pumilio 5; degenerate repeat lies at 168–205; that stretch reads VKQRFIDVTTNFYGYRIMIQTIKVFKKRGDLKVYDQIL. The Pumilio 6; degenerate repeat unit spans residues 206 to 243; sequence RLIGVHALYLTKDPDMGNKTFQHAINLHHQDCTTFIAC. Pumilio repeat units lie at residues 244–284 and 285–319; these read GLQS…EIVK and CDED…DFFG.

The protein resides in the cytoplasm. Its function is as follows. Sequence-specific RNA-binding protein that regulates translation and mRNA stability by binding the 3'-UTR of target mRNAs. The sequence is that of Putative pumilio homolog 22 (APUM22) from Arabidopsis thaliana (Mouse-ear cress).